The primary structure comprises 238 residues: MLFPTPLISGRLERRYKRFLADVTLDDGRFITASVPNTGSMLGLTAPGSRVWLSFSDAPHRKYAHTLQIVEADNTLVGVNTGLPNRIAEEAILKGLIPDLDGYATLKREQKYGRNSRIDLLLDDGPRPRAYVEVKNVHFIRTPGLAEFPDTVTARGAKHLDELVDVVAAGHRGIMLFIIQRADCSRFGISGDLDPFYARAFERAIASGVEAWAVRCHITENGIDATELVPIEDMRRIE.

Belongs to the SfsA family.

This is Sugar fermentation stimulation protein homolog from Brucella abortus (strain S19).